A 1096-amino-acid polypeptide reads, in one-letter code: Mediator of replication checkpoint protein 1 (1096 aa).

A compositionally biased stretch (basic and acidic residues) spans 68-85; that stretch reads EGKKAPEQNHNNGKDRSE. Residues 68–90 form a disordered region; it reads EGKKAPEQNHNNGKDRSENSLPT. The residue at position 144 (Ser144) is a Phosphoserine. Disordered stretches follow at residues 166–200, 294–316, and 336–365; these read ALKT…IEPQ, IQSE…YKKP, and DDSS…LHEN. Over residues 181–200 the composition is skewed to polar residues; it reads RIDSSGATSQTQPIKSIEPQ. A compositionally biased stretch (basic and acidic residues) spans 294–315; the sequence is IQSELASEDSKREKARNVEYKK. Positions 336 to 346 are enriched in acidic residues; it reads DDSSSNEDDDI. Ser409, Ser411, and Ser434 each carry phosphoserine. Residues 488-542 adopt a coiled-coil conformation; that stretch reads QKEVIETKGLKLEDMAKEKEIVENLLEQEILRNKRIRQKEKRREKLEENDFQLNA. The disordered stretch occupies residues 527-620; the sequence is EKRREKLEEN…VEAKPKEKAD (94 aa). The span at 547 to 560 shows a compositional bias: low complexity; the sequence is SDSGSESSGFALSG. Basic residues predominate over residues 591–600; that stretch reads KQKKSHHVKH. Residues Ser605 and Ser607 each carry the phosphoserine modification. Position 609 is a phosphothreonine (Thr609). Positions 611–620 are enriched in basic and acidic residues; it reads VEAKPKEKAD. The stretch at 652 to 716 forms a coiled coil; it reads DTQNIEEVMA…IKELKKRGVT (65 aa). The disordered stretch occupies residues 724 to 743; it reads EESEDEWHGIGGADGEGSDD. Phosphoserine is present on residues Ser801 and Ser807. Residues 881–898 show a composition bias toward polar residues; the sequence is DTQDNSINVGDNTGNNEQ. The disordered stretch occupies residues 881 to 903; the sequence is DTQDNSINVGDNTGNNEQKPVDQ. Ser911 is modified (phosphoserine). The interval 1058–1096 is disordered; it reads RKTEGSHRYHHDHHNKKMKMKTKTKSNKLFESGQDSFDN. Over residues 1065 to 1083 the composition is skewed to basic residues; sequence RYHHDHHNKKMKMKTKTKS.

Interacts with CDC45 in S phase. Post-translationally, phosphorylated by MEC1 and RAD53.

The protein resides in the nucleus. Required for normal DNA replication. Phosphorylated in response to DNA replication stress. Phosphorylation allows it to mediate the activation of RAD53. The chain is Mediator of replication checkpoint protein 1 (MRC1) from Saccharomyces cerevisiae (strain ATCC 204508 / S288c) (Baker's yeast).